The following is a 741-amino-acid chain: Catalase-peroxidase (741 aa).

A signal peptide spans 1 to 23 (MLKKIVTALGMSGMLLASSNAIA). A cross-link (tryptophyl-tyrosyl-methioninium (Trp-Tyr) (with M-249)) is located at residues 102 to 223 (WHDAGTYRIY…YAATQMGLIY (122 aa)). H103 serves as the catalytic Proton acceptor. Positions 223–249 (YVNPEGPDGKPDIKGAASEIRQAFRAM) form a cross-link, tryptophyl-tyrosyl-methioninium (Tyr-Met) (with W-102). Residue H264 participates in heme b binding.

It belongs to the peroxidase family. Peroxidase/catalase subfamily. As to quaternary structure, homodimer or homotetramer. Heme b is required as a cofactor. In terms of processing, formation of the three residue Trp-Tyr-Met cross-link is important for the catalase, but not the peroxidase activity of the enzyme.

The enzyme catalyses H2O2 + AH2 = A + 2 H2O. The catalysed reaction is 2 H2O2 = O2 + 2 H2O. Bifunctional enzyme with both catalase and broad-spectrum peroxidase activity. This is Catalase-peroxidase from Francisella tularensis subsp. tularensis (strain FSC 198).